Reading from the N-terminus, the 244-residue chain is Leucyl/phenylalanyl-tRNA--protein transferase (244 aa).

This sequence belongs to the L/F-transferase family.

The protein resides in the cytoplasm. The catalysed reaction is N-terminal L-lysyl-[protein] + L-leucyl-tRNA(Leu) = N-terminal L-leucyl-L-lysyl-[protein] + tRNA(Leu) + H(+). It catalyses the reaction N-terminal L-arginyl-[protein] + L-leucyl-tRNA(Leu) = N-terminal L-leucyl-L-arginyl-[protein] + tRNA(Leu) + H(+). The enzyme catalyses L-phenylalanyl-tRNA(Phe) + an N-terminal L-alpha-aminoacyl-[protein] = an N-terminal L-phenylalanyl-L-alpha-aminoacyl-[protein] + tRNA(Phe). Functions in the N-end rule pathway of protein degradation where it conjugates Leu, Phe and, less efficiently, Met from aminoacyl-tRNAs to the N-termini of proteins containing an N-terminal arginine or lysine. This chain is Leucyl/phenylalanyl-tRNA--protein transferase, found in Thermodesulfovibrio yellowstonii (strain ATCC 51303 / DSM 11347 / YP87).